A 341-amino-acid chain; its full sequence is Syntaxin-122 (341 aa).

Position 1 is an N-acetylmethionine (Met1). Disordered stretches follow at residues 1–22 (MNDL…PPHS) and 111–137 (LDRA…RTSV). Residues 1–284 (MNDLLSGSFK…ARFYQKNTRK (284 aa)) lie on the Cytoplasmic side of the membrane. 2 stretches are compositionally biased toward polar residues: residues 8-21 (SFKT…SPPH) and 126-137 (PGSSSDRQRTSV). Residues 64-185 (CHNLRSSNEQ…GEYPDEATLE (122 aa)) adopt a coiled-coil conformation. The t-SNARE coiled-coil homology domain occupies 213–275 (INEIQERHDA…RSGADRLVKA (63 aa)). A helical; Anchor for type IV membrane protein membrane pass occupies residues 285 to 305 (WTCFAILLLLIIVVLIVVFTV). Residues 306-341 (KPWESNGGGGGGAPRQATPVQAQPPPPPAVNRRLLR) lie on the Vesicular side of the membrane. The disordered stretch occupies residues 312–341 (GGGGGGAPRQATPVQAQPPPPPAVNRRLLR).

Belongs to the syntaxin family. In terms of assembly, part of the t-SNARE complex.

It is found in the membrane. In terms of biological role, vesicle trafficking protein that functions in the secretory pathway. In Arabidopsis thaliana (Mouse-ear cress), this protein is Syntaxin-122 (SYP122).